Here is a 245-residue protein sequence, read N- to C-terminus: Biosynthetic peptidoglycan transglycosylase (245 aa).

The helical transmembrane segment at 20 to 42 (VYAGSVFAGAWLATQLFYLAQIA) threads the bilayer.

It belongs to the glycosyltransferase 51 family.

It localises to the cell inner membrane. It catalyses the reaction [GlcNAc-(1-&gt;4)-Mur2Ac(oyl-L-Ala-gamma-D-Glu-L-Lys-D-Ala-D-Ala)](n)-di-trans,octa-cis-undecaprenyl diphosphate + beta-D-GlcNAc-(1-&gt;4)-Mur2Ac(oyl-L-Ala-gamma-D-Glu-L-Lys-D-Ala-D-Ala)-di-trans,octa-cis-undecaprenyl diphosphate = [GlcNAc-(1-&gt;4)-Mur2Ac(oyl-L-Ala-gamma-D-Glu-L-Lys-D-Ala-D-Ala)](n+1)-di-trans,octa-cis-undecaprenyl diphosphate + di-trans,octa-cis-undecaprenyl diphosphate + H(+). It functions in the pathway cell wall biogenesis; peptidoglycan biosynthesis. In terms of biological role, peptidoglycan polymerase that catalyzes glycan chain elongation from lipid-linked precursors. The chain is Biosynthetic peptidoglycan transglycosylase from Burkholderia lata (strain ATCC 17760 / DSM 23089 / LMG 22485 / NCIMB 9086 / R18194 / 383).